The sequence spans 33 residues: Cytochrome b6-f complex subunit 8 (33 aa).

Residues 2–22 (IFQIGWAALAAIFTFSIAMVV) traverse the membrane as a helical segment.

This sequence belongs to the PetN family. In terms of assembly, the 4 large subunits of the cytochrome b6-f complex are cytochrome b6, subunit IV (17 kDa polypeptide, PetD), cytochrome f and the Rieske protein, while the 4 small subunits are PetG, PetL, PetM and PetN. The complex functions as a dimer.

The protein localises to the cellular thylakoid membrane. Functionally, component of the cytochrome b6-f complex, which mediates electron transfer between photosystem II (PSII) and photosystem I (PSI), cyclic electron flow around PSI, and state transitions. This Prochlorococcus marinus (strain MIT 9301) protein is Cytochrome b6-f complex subunit 8.